A 548-amino-acid polypeptide reads, in one-letter code: 5-epi-aristolochene synthase 3 (548 aa).

5 residues coordinate Mg(2+): Asp-301, Asp-305, Asp-444, Thr-448, and Glu-452. The DDXXD motif signature appears at 301–305 (DDTFD).

It belongs to the terpene synthase family. In terms of assembly, monomer. Mg(2+) serves as cofactor. As to expression, expressed in roots, but not in shoots.

Its subcellular location is the cytoplasm. It catalyses the reaction (2E,6E)-farnesyl diphosphate = (+)-5-epi-aristolochene + diphosphate. Its pathway is secondary metabolite biosynthesis; terpenoid biosynthesis. Its function is as follows. Catalyzes the cyclization of trans,trans-farnesyl diphosphate (FPP) to the bicyclic intermediate 5-epi-aristolochene, initial step in the conversion of FPP to the sesquiterpenoid antifungal phytoalexin capsidiol. Produces germacrene A as an enzyme-bound intermediate that is not released by the enzyme, but is further cyclized to produce the bicyclic 5-epi-aristolochene. The protein is 5-epi-aristolochene synthase 3 of Nicotiana attenuata (Coyote tobacco).